We begin with the raw amino-acid sequence, 1028 residues long: Pro-apoptotic serine protease nma111 (1028 aa).

The disordered stretch occupies residues 1-49 (MDLNGDAGAKRKRSSITTPAERPVKHLRPESSALTPGDSTPANGTVYDV). Polar residues predominate over residues 32–43 (SALTPGDSTPAN). Residues 82 to 266 (VVSIHFCQTC…AATDYFLPLD (185 aa)) are serine protease. Catalysis depends on charge relay system residues histidine 120, aspartate 151, and serine 233. 2 consecutive PDZ domains span residues 289 to 374 (QWIL…LLVQ) and 876 to 957 (VFCG…VTFD). Residues 983–1028 (QPSGWRTVSHDKDKYKDGIAPDAANLNPDAMDEGFDGVSDIEPDLE) are disordered. A compositionally biased stretch (basic and acidic residues) spans 990–1001 (VSHDKDKYKDGI). The segment covering 1012–1028 (AMDEGFDGVSDIEPDLE) has biased composition (acidic residues).

This sequence belongs to the peptidase S1C family.

It is found in the nucleus. In terms of biological role, nuclear serine protease which mediates apoptosis. This chain is Pro-apoptotic serine protease nma111 (nma111), found in Aspergillus niger (strain ATCC MYA-4892 / CBS 513.88 / FGSC A1513).